We begin with the raw amino-acid sequence, 155 residues long: Cyclic pyranopterin monophosphate synthase (155 aa).

Residues 75-77 and 111-112 contribute to the substrate site; these read LCH and ME. Asp-126 is an active-site residue.

It belongs to the MoaC family. Homohexamer; trimer of dimers.

The enzyme catalyses (8S)-3',8-cyclo-7,8-dihydroguanosine 5'-triphosphate = cyclic pyranopterin phosphate + diphosphate. The protein operates within cofactor biosynthesis; molybdopterin biosynthesis. In terms of biological role, catalyzes the conversion of (8S)-3',8-cyclo-7,8-dihydroguanosine 5'-triphosphate to cyclic pyranopterin monophosphate (cPMP). In Corynebacterium efficiens (strain DSM 44549 / YS-314 / AJ 12310 / JCM 11189 / NBRC 100395), this protein is Cyclic pyranopterin monophosphate synthase.